The primary structure comprises 246 residues: Phosphomannomutase 2 (246 aa).

N-acetylalanine is present on Ala2. The active-site Nucleophile is the Asp12. Residues Asp12 and Asp14 each coordinate Mg(2+). Asp14 functions as the Proton donor/acceptor in the catalytic mechanism. 4 residues coordinate alpha-D-mannose 1-phosphate: Arg21, Arg123, Arg134, and Arg141. Residue Lys149 is modified to N6-acetyllysine. The alpha-D-mannose 1-phosphate site is built by Ser179 and Asp181. Mg(2+)-binding residues include Asp209, Phe221, Asp223, and Thr226.

It belongs to the eukaryotic PMM family. In terms of assembly, homodimer.

The protein localises to the cytoplasm. It catalyses the reaction alpha-D-mannose 1-phosphate = D-mannose 6-phosphate. The protein operates within nucleotide-sugar biosynthesis; GDP-alpha-D-mannose biosynthesis; alpha-D-mannose 1-phosphate from D-fructose 6-phosphate: step 2/2. Functionally, involved in the synthesis of the GDP-mannose and dolichol-phosphate-mannose required for a number of critical mannosyl transfer reactions. This chain is Phosphomannomutase 2 (PMM2), found in Homo sapiens (Human).